We begin with the raw amino-acid sequence, 96 residues long: Large ribosomal subunit protein uL23 (96 aa).

This sequence belongs to the universal ribosomal protein uL23 family. As to quaternary structure, part of the 50S ribosomal subunit. Contacts protein L29, and trigger factor when it is bound to the ribosome.

Functionally, one of the early assembly proteins it binds 23S rRNA. One of the proteins that surrounds the polypeptide exit tunnel on the outside of the ribosome. Forms the main docking site for trigger factor binding to the ribosome. This Nitratidesulfovibrio vulgaris (strain DSM 19637 / Miyazaki F) (Desulfovibrio vulgaris) protein is Large ribosomal subunit protein uL23.